Here is a 96-residue protein sequence, read N- to C-terminus: MKFRFNGASNVELNNREIELTREEVEGSSIATVGDALRYLFGKYAETRDSFFDHHGELVHGTICIINKMDWEILEKERSPVKHGDHIVLISTIHGG.

G96 bears the 1-thioglycine mark. G96 participates in a covalent cross-link: Glycyl lysine isopeptide (Gly-Lys) (interchain with K-? in acceptor proteins).

This sequence belongs to the URM1 family. Post-translationally, C-terminal thiocarboxylation occurs in 2 steps, it is first acyl-adenylated (-COAMP) via the hesA/moeB/thiF part of UBA4, then thiocarboxylated (-COSH) via the rhodanese domain of UBA4.

It localises to the cytoplasm. It participates in tRNA modification; 5-methoxycarbonylmethyl-2-thiouridine-tRNA biosynthesis. In terms of biological role, acts as a sulfur carrier required for 2-thiolation of mcm(5)S(2)U at tRNA wobble positions of cytosolic tRNA(Lys), tRNA(Glu) and tRNA(Gln). Serves as sulfur donor in tRNA 2-thiolation reaction by being thiocarboxylated (-COSH) at its C-terminus by the MOCS3 homolog UBA4. The sulfur is then transferred to tRNA to form 2-thiolation of mcm(5)S(2)U. Prior mcm(5) tRNA modification by the elongator complex is required for 2-thiolation. Also acts as a ubiquitin-like protein (UBL) that is covalently conjugated via an isopeptide bond to lysine residues of target proteins such as AHP1. The thiocarboxylated form serves as substrate for conjugation and oxidative stress specifically induces the formation of UBL-protein conjugates. The protein is Ubiquitin-related modifier 1 of Encephalitozoon cuniculi (strain GB-M1) (Microsporidian parasite).